Consider the following 459-residue polypeptide: Mitochondrial distribution and morphology protein 10 (459 aa).

The protein belongs to the MDM10 family. As to quaternary structure, component of the ER-mitochondria encounter structure (ERMES) or MDM complex, composed of MMM1, MDM10, MDM12 and MDM34. Associates with the mitochondrial outer membrane sorting assembly machinery SAM(core) complex.

It is found in the mitochondrion outer membrane. Its function is as follows. Component of the ERMES/MDM complex, which serves as a molecular tether to connect the endoplasmic reticulum and mitochondria. Components of this complex are involved in the control of mitochondrial shape and protein biogenesis and may function in phospholipid exchange. MDM10 is involved in the late assembly steps of the general translocase of the mitochondrial outer membrane (TOM complex). Functions in the TOM40-specific route of the assembly of outer membrane beta-barrel proteins, including the association of TOM40 with the receptor TOM22 and small TOM proteins. Can associate with the SAM(core) complex as well as the MDM12-MMM1 complex, both involved in late steps of the major beta-barrel assembly pathway, that is responsible for biogenesis of all outer membrane beta-barrel proteins. May act as a switch that shuttles between both complexes and channels precursor proteins into the TOM40-specific pathway. Plays a role in mitochondrial morphology and in the inheritance of mitochondria. This Clavispora lusitaniae (strain ATCC 42720) (Yeast) protein is Mitochondrial distribution and morphology protein 10.